Reading from the N-terminus, the 326-residue chain is Nucleoporin Nup37 (326 aa).

WD repeat units follow at residues 6 to 54 (SRNA…FQEE), 61 to 109 (IQYK…LFTS), 115 to 154 (NEYKVLEGHTDFINGLVFDPKEGQEIASVSDDHTCRIWNL), 159 to 195 (TAHFVLHSPGMSVCWHPEETFKLMVAEKNGTIRFYDL), 199 to 237 (QAILSLESEQVPLMSAHWCLKNTFKVGAVAGNDWLIWDI), 242 to 282 (YPQN…QFQI), and 287 to 324 (HPQPILMGSVAVGSGLSWHRTLPLCVIGGDHKLLFWVT).

Component of the Nup107-160 subcomplex of the nuclear pore complex (NPC). The Nup107-160 subcomplex includes NUP160, NUP133, NUP107, NUP98, NUP85, NUP43, NUP37, SEH1 and SEC13.

The protein localises to the chromosome. It localises to the centromere. Its subcellular location is the kinetochore. The protein resides in the nucleus. It is found in the nuclear pore complex. Its function is as follows. Component of the Nup107-160 subcomplex of the nuclear pore complex (NPC). The Nup107-160 subcomplex is required for the assembly of a functional NPC. The Nup107-160 subcomplex is also required for normal kinetochore microtubule attachment, mitotic progression and chromosome segregation. This Homo sapiens (Human) protein is Nucleoporin Nup37 (NUP37).